The chain runs to 510 residues: MIWHVQNENFILDSTRIFMKAFHLLLFDGSLIFPECILIFGLILLLMIDSTSDQKDIPWLYFISSTSLVMSITALLFRWREEPMISFSGNFQTNNFNEIFQFLILLCSTLCIPLSVEYIECTEMAITEFLLFILTATIGGMFLCGANDLITIFVAPECFSLCSYLLSGYTKKDVRSNEATMKYLLMGGASSSILVHGFSWLYGSSGGEIELQEIVNGLINTQMYNSPGISIALIFITVGIGFKLSPAPSHQWTPDVYEGSPTPVVAFLSVTSKVAASASATRIFDIPFYFSSNEWHLLLEILAILSMILGNLIAITQTSMKRMLAYSSIGQIGYVIIGIIVGDSNDGYASMITYMLFYISMNLGTFACIVLFGLRTGTENIRDYAGLYTKDPFLALSLALCLLSLGGLPPLAGFFGKLYLFWCGWQAGLYLLVLIGLLTSVVSIYYYLKIIKLLMTGRNQEITPHVRNYRRSPLRSNNSIELSMIVCVIASTIPGISMNPIIAIAQDTLF.

13 helical membrane passes run 24 to 44 (LLLFDGSLIFPECILIFGLIL), 57 to 77 (IPWLYFISSTSLVMSITALLF), 99 to 119 (IFQFLILLCSTLCIPLSVEYI), 124 to 144 (MAITEFLLFILTATIGGMFLC), 149 to 169 (LITIFVAPECFSLCSYLLSGY), 183 to 203 (YLLMGGASSSILVHGFSWLYG), 227 to 247 (PGISIALIFITVGIGFKLSPA), 295 to 315 (WHLLLEILAILSMILGNLIAI), 323 to 343 (MLAYSSIGQIGYVIIGIIVGD), 354 to 374 (YMLFYISMNLGTFACIVLFGL), 395 to 415 (ALSLALCLLSLGGLPPLAGFF), 418 to 438 (LYLFWCGWQAGLYLLVLIGLL), and 484 to 504 (MIVCVIASTIPGISMNPIIAI).

This sequence belongs to the complex I subunit 2 family. In terms of assembly, NDH is composed of at least 16 different subunits, 5 of which are encoded in the nucleus.

The protein localises to the plastid. It is found in the chloroplast thylakoid membrane. The enzyme catalyses a plastoquinone + NADH + (n+1) H(+)(in) = a plastoquinol + NAD(+) + n H(+)(out). The catalysed reaction is a plastoquinone + NADPH + (n+1) H(+)(in) = a plastoquinol + NADP(+) + n H(+)(out). In terms of biological role, NDH shuttles electrons from NAD(P)H:plastoquinone, via FMN and iron-sulfur (Fe-S) centers, to quinones in the photosynthetic chain and possibly in a chloroplast respiratory chain. The immediate electron acceptor for the enzyme in this species is believed to be plastoquinone. Couples the redox reaction to proton translocation, and thus conserves the redox energy in a proton gradient. This chain is NAD(P)H-quinone oxidoreductase subunit 2 B, chloroplastic, found in Helianthus annuus (Common sunflower).